We begin with the raw amino-acid sequence, 562 residues long: Potassium-transporting ATPase potassium-binding subunit (562 aa).

A run of 12 helical transmembrane segments spans residues Phe-6 to Phe-26, Tyr-62 to Met-82, Gly-132 to Ile-152, Leu-175 to Leu-195, Phe-253 to Val-273, Leu-283 to Leu-303, Phe-327 to Val-347, Ala-356 to Val-376, Gly-379 to Gly-399, Met-416 to Leu-436, Leu-483 to Ile-503, and Leu-526 to Ala-546.

The protein belongs to the KdpA family. In terms of assembly, the system is composed of three essential subunits: KdpA, KdpB and KdpC.

It localises to the cell inner membrane. Functionally, part of the high-affinity ATP-driven potassium transport (or Kdp) system, which catalyzes the hydrolysis of ATP coupled with the electrogenic transport of potassium into the cytoplasm. This subunit binds the periplasmic potassium ions and delivers the ions to the membrane domain of KdpB through an intramembrane tunnel. This chain is Potassium-transporting ATPase potassium-binding subunit, found in Yersinia pseudotuberculosis serotype I (strain IP32953).